A 141-amino-acid polypeptide reads, in one-letter code: ATP synthase epsilon chain (141 aa).

This sequence belongs to the ATPase epsilon chain family. In terms of assembly, F-type ATPases have 2 components, CF(1) - the catalytic core - and CF(0) - the membrane proton channel. CF(1) has five subunits: alpha(3), beta(3), gamma(1), delta(1), epsilon(1). CF(0) has three main subunits: a, b and c.

Its subcellular location is the cell inner membrane. Its function is as follows. Produces ATP from ADP in the presence of a proton gradient across the membrane. The chain is ATP synthase epsilon chain from Methylobacillus flagellatus (strain ATCC 51484 / DSM 6875 / VKM B-1610 / KT).